The primary structure comprises 305 residues: Homoserine O-acetyltransferase (305 aa).

C142 functions as the Acyl-thioester intermediate in the catalytic mechanism. Positions 163 and 192 each coordinate substrate. Residue H235 is the Proton acceptor of the active site. Residue E237 is part of the active site. R249 provides a ligand contact to substrate.

The protein belongs to the MetA family.

It localises to the cytoplasm. It carries out the reaction L-homoserine + acetyl-CoA = O-acetyl-L-homoserine + CoA. It functions in the pathway amino-acid biosynthesis; L-methionine biosynthesis via de novo pathway; O-acetyl-L-homoserine from L-homoserine: step 1/1. Transfers an acetyl group from acetyl-CoA to L-homoserine, forming acetyl-L-homoserine. The chain is Homoserine O-acetyltransferase from Cereibacter sphaeroides (strain ATCC 17025 / ATH 2.4.3) (Rhodobacter sphaeroides).